The primary structure comprises 343 residues: Stimulator of interferon genes protein homolog (343 aa).

An N-linked (GlcNAc...) asparagine glycan is attached at Asn-84. 2 consecutive transmembrane segments (helical) span residues Ile-87–Tyr-107 and Asn-109–Thr-129. Position 157 (Asn-157) interacts with 3',2'-cGAMP. N-linked (GlcNAc...) asparagine glycosylation occurs at Asn-187. Residues Leu-195 to Asp-215 form a helical membrane-spanning segment. 5 residues coordinate 3',2'-cGAMP: Arg-232, Lys-235, Glu-255, Thr-258, and Ser-262. N-linked (GlcNAc...) asparagine glycans are attached at residues Asn-270 and Asn-333.

The protein belongs to the STING family.

The protein localises to the endoplasmic reticulum membrane. In terms of biological role, facilitator of innate immune signaling that binds cyclic dinucleotides produced in response to infection by bacteria and/or viruses, and promotes the activation of the NF-kappa-B transcription factor Rel (Relish). Recognizes and binds cyclic di-GMP (c-di-GMP), a cyclic dinucleotide messenger produced by bacteria such as L.monocytogenes, leading to activation of the peptidoglycan recognition protein (IMD) signaling pathway and activation of Rel (Relish). Innate immune response is triggered in response to double-stranded RNA from viruses delivered to the cytoplasm: Sting acts by specifically binding cyclic dinucleotides 3',2'-cGAMP and 2',3'-cGAMP produced by cGlr1 and cGlr2 in response to RNA virus in the cytosol. Has a strong preference for 3',2'-cGAMP compared to other cyclic dinucleotides such as 2',3'-cGAMP or 3'3'-c-di-GMP. Upon binding to 3',2'-cGAMP, activates an antiviral immune response, leading to the activation of Rel (Relish). Activated in brain in response to Zika virus infection, leading to autophagy. In Drosophila melanogaster (Fruit fly), this protein is Stimulator of interferon genes protein homolog.